Reading from the N-terminus, the 862-residue chain is Kinesin-like protein KIN-7J (862 aa).

One can recognise a Kinesin motor domain in the interval 9–331 (RIVVSVRLRP…LLFANCAKDV (323 aa)). 95–102 (GQTSSGKT) lines the ATP pocket. Residues 340–415 (VMSDKALVKH…NFRKVASDGD (76 aa)) adopt a coiled-coil conformation. 2 stretches are compositionally biased toward basic and acidic residues: residues 475-499 (EEHEAQRVAHRAESEPPEEHCKEVQ) and 518-531 (PEKKTHTDDQKHSE). Disordered regions lie at residues 475–532 (EEHE…HSES) and 596–643 (DDSA…STCN). A compositionally biased stretch (polar residues) spans 598–610 (SASTTPSSETFRY). Residues 613–629 (RRPEKVRKSLSPDEIAD) show a composition bias toward basic and acidic residues.

Belongs to the TRAFAC class myosin-kinesin ATPase superfamily. Kinesin family. KIN-7 subfamily.

The sequence is that of Kinesin-like protein KIN-7J from Oryza sativa subsp. japonica (Rice).